Here is a 302-residue protein sequence, read N- to C-terminus: D-alanine--D-alanine ligase (302 aa).

The 200-residue stretch at 99 to 298 folds into the ATP-grasp domain; the sequence is KRLFVAEGIP…FEQLIQRIID (200 aa). 128-183 serves as a coordination point for ATP; sequence LAALGSPVVVKPADGGSTVGVTIAREAGHLPEAVRLALQYSPQVLIEQYIPGQEIT. Mg(2+)-binding residues include aspartate 252, glutamate 265, and asparagine 267.

It belongs to the D-alanine--D-alanine ligase family. Requires Mg(2+) as cofactor. It depends on Mn(2+) as a cofactor.

It is found in the cytoplasm. The enzyme catalyses 2 D-alanine + ATP = D-alanyl-D-alanine + ADP + phosphate + H(+). The protein operates within cell wall biogenesis; peptidoglycan biosynthesis. In terms of biological role, cell wall formation. This chain is D-alanine--D-alanine ligase, found in Gloeobacter violaceus (strain ATCC 29082 / PCC 7421).